The following is a 42-amino-acid chain: Photosystem I reaction center subunit IX (42 aa).

A helical membrane pass occupies residues 7–27 (YLSVAPVLSTLWFGSLAGLLI).

Belongs to the PsaJ family.

It is found in the plastid. It localises to the chloroplast thylakoid membrane. Its function is as follows. May help in the organization of the PsaE and PsaF subunits. This Lepidium virginicum (Virginia pepperweed) protein is Photosystem I reaction center subunit IX.